A 145-amino-acid polypeptide reads, in one-letter code: uncharacterized protein (145 aa).

Residues 46–66 traverse the membrane as a helical segment; the sequence is FFFLFFLFFFFFFTFQFLVAF.

It localises to the membrane. This is an uncharacterized protein from Saccharomyces cerevisiae (strain ATCC 204508 / S288c) (Baker's yeast).